Consider the following 404-residue polypeptide: Cysteine desulfurase IscS (404 aa).

Pyridoxal 5'-phosphate is bound by residues A75–T76, N155, Q183, and S203–H205. K206 is subject to N6-(pyridoxal phosphate)lysine. T243 contributes to the pyridoxal 5'-phosphate binding site. C328 functions as the Cysteine persulfide intermediate in the catalytic mechanism. C328 serves as a coordination point for [2Fe-2S] cluster.

The protein belongs to the class-V pyridoxal-phosphate-dependent aminotransferase family. NifS/IscS subfamily. As to quaternary structure, homodimer. Forms a heterotetramer with IscU, interacts with other sulfur acceptors. The cofactor is pyridoxal 5'-phosphate.

Its subcellular location is the cytoplasm. The catalysed reaction is (sulfur carrier)-H + L-cysteine = (sulfur carrier)-SH + L-alanine. It functions in the pathway cofactor biosynthesis; iron-sulfur cluster biosynthesis. Master enzyme that delivers sulfur to a number of partners involved in Fe-S cluster assembly, tRNA modification or cofactor biosynthesis. Catalyzes the removal of elemental sulfur atoms from cysteine to produce alanine. Functions as a sulfur delivery protein for Fe-S cluster synthesis onto IscU, an Fe-S scaffold assembly protein, as well as other S acceptor proteins. The chain is Cysteine desulfurase IscS from Ruthia magnifica subsp. Calyptogena magnifica.